The following is a 112-amino-acid chain: CLAVATA3/ESR (CLE)-related protein 44 (112 aa).

A signal peptide spans 1 to 39 (MATTIDQTSIKSLHFHQVIRLIITIIFLAFLFLIGPTSS). Positions 41–112 (NHHLHESSSK…VPSGPNPISN (72 aa)) are disordered. Positions 62 to 71 (QPSTPSSSTM) are enriched in polar residues. Residues Pro-104 and Pro-107 each carry the hydroxyproline modification. Pro-107 is a glycosylation site (O-linked (Ara...) hydroxyproline).

It belongs to the CLV3/ESR signal peptide family. In terms of assembly, interacts specifically with the leucine-rich repeat receptor-like protein kinase TDR, especially in the presence of SERK2. Post-translationally, the O-glycosylation (arabinosylation) of the hydroxyproline Pro-107 enhances binding affinity of the CLE44p peptide for its receptor. Mostly expressed in flowers and leaves. Widely expressed along the vascular strands. In roots and hypocotyls, present in endodermal cells as well as cells in the phloem and the adjacent pericycle.

The protein resides in the secreted. It is found in the extracellular space. Its function is as follows. Extracellular signal peptide that regulates cell fate. May act with TDR as a ligand-receptor pair in a signal transduction pathway that represses tracheary element differentiation but promotes the formation of procambial cells adjacent to phloem cells in the veins. Regulates the transition of protophloem cells from proliferation to differentiation, thus impinging on postembryonic growth capacity of the root meristem; this signaling pathway requires CRN and CLV2. The sequence is that of CLAVATA3/ESR (CLE)-related protein 44 from Arabidopsis thaliana (Mouse-ear cress).